A 209-amino-acid polypeptide reads, in one-letter code: 2,3-bisphosphoglycerate-dependent phosphoglycerate mutase (209 aa).

Substrate contacts are provided by residues 8–15 (RHGQSEGN), 21–22 (TG), R60, 87–90 (ERDY), K98, 114–115 (RR), and 158–159 (GN). H9 acts as the Tele-phosphohistidine intermediate in catalysis. The active-site Proton donor/acceptor is E87.

This sequence belongs to the phosphoglycerate mutase family. BPG-dependent PGAM subfamily. Homodimer.

The enzyme catalyses (2R)-2-phosphoglycerate = (2R)-3-phosphoglycerate. It participates in carbohydrate degradation; glycolysis; pyruvate from D-glyceraldehyde 3-phosphate: step 3/5. In terms of biological role, catalyzes the interconversion of 2-phosphoglycerate and 3-phosphoglycerate. In Rhizobium etli (strain ATCC 51251 / DSM 11541 / JCM 21823 / NBRC 15573 / CFN 42), this protein is 2,3-bisphosphoglycerate-dependent phosphoglycerate mutase.